An 824-amino-acid polypeptide reads, in one-letter code: Leucine--tRNA ligase (824 aa).

A 'HIGH' region motif is present at residues 42–52; sequence PYPSGRIHMGH. The short motif at 581 to 585 is the 'KMSKS' region element; it reads KMSKS. An ATP-binding site is contributed by Lys584.

This sequence belongs to the class-I aminoacyl-tRNA synthetase family.

It localises to the cytoplasm. The enzyme catalyses tRNA(Leu) + L-leucine + ATP = L-leucyl-tRNA(Leu) + AMP + diphosphate. In Geotalea daltonii (strain DSM 22248 / JCM 15807 / FRC-32) (Geobacter daltonii), this protein is Leucine--tRNA ligase.